Consider the following 209-residue polypeptide: Glutathione S-transferase 1, isoform C (209 aa).

Residues 1–80 (MDFYYLPGSA…YLAEKYGKDD (80 aa)) enclose the GST N-terminal domain. Residues S9, 50-52 (HCI), and 64-66 (ESR) contribute to the glutathione site. In terms of domain architecture, GST C-terminal spans 86-207 (DPQKRAVVNQ…AGIEEFKKYF (122 aa)).

This sequence belongs to the GST superfamily. Theta family. As to quaternary structure, homodimer.

The catalysed reaction is RX + glutathione = an S-substituted glutathione + a halide anion + H(+). It carries out the reaction 1,1,1-trichloro-2,2-bis(4-chlorophenyl)ethane = 1,1-dichloro-2,2-bis(4-chlorophenyl)ethylene + chloride + H(+). Its function is as follows. Conjugation of reduced glutathione to a wide number of exogenous and endogenous hydrophobic electrophiles. Has DDT dehydrochlorinase activity. The polypeptide is Glutathione S-transferase 1, isoform C (GstD1) (Anopheles gambiae (African malaria mosquito)).